Consider the following 806-residue polypeptide: Lon protease (806 aa).

The 194-residue stretch at 14–207 (YPVLPLRDIV…KALGFMEGEI (194 aa)) folds into the Lon N-terminal domain. 359 to 366 (GPPGVGKT) is an ATP binding site. Residues 594-775 (DDQVGVVTGL…GEVIAHALLR (182 aa)) form the Lon proteolytic domain. Residues serine 681 and lysine 724 contribute to the active site. Residues 786 to 806 (SQPAALPSVDSQDEAGTSIAH) form a disordered region.

It belongs to the peptidase S16 family. In terms of assembly, homohexamer. Organized in a ring with a central cavity.

It is found in the cytoplasm. It carries out the reaction Hydrolysis of proteins in presence of ATP.. ATP-dependent serine protease that mediates the selective degradation of mutant and abnormal proteins as well as certain short-lived regulatory proteins. Required for cellular homeostasis and for survival from DNA damage and developmental changes induced by stress. Degrades polypeptides processively to yield small peptide fragments that are 5 to 10 amino acids long. Binds to DNA in a double-stranded, site-specific manner. In R.meliloti it is important for controlling the turnover of a constitutively expressed protein(s) that, when unregulated, disrupts normal nodule formation and normal growth. This Rhizobium meliloti (strain 1021) (Ensifer meliloti) protein is Lon protease.